A 621-amino-acid chain; its full sequence is Probable potassium transport system protein Kup 2 (621 aa).

Helical transmembrane passes span 12-32, 52-72, 101-121, 138-158, 166-186, 213-233, 249-269, 286-306, 338-358, 370-390, 396-416, and 420-440; these read ITVA…LYAL, VLSL…VAII, WIIT…SMIT, PDLK…LFFI, VGKL…ILGL, GLAF…EALY, FGFV…LLLI, ALIP…QAVI, IYVP…VIGF, IAVT…MVLM, LLVA…FAAN, and IPEG…VLTT.

Belongs to the HAK/KUP transporter (TC 2.A.72) family.

The protein localises to the cell inner membrane. The catalysed reaction is K(+)(in) + H(+)(in) = K(+)(out) + H(+)(out). Transport of potassium into the cell. Likely operates as a K(+):H(+) symporter. The chain is Probable potassium transport system protein Kup 2 from Dechloromonas aromatica (strain RCB).